A 170-amino-acid polypeptide reads, in one-letter code: AP-5 complex subunit sigma-1 (170 aa).

As to quaternary structure, probably part of the adaptor protein complex 5 (AP-5) a tetramer composed of AP5B1, AP5M1, AP5S1 and AP5Z1. Interacts with ZFYVE26 and SPG11.

The protein resides in the cytoplasm. The protein localises to the cytosol. It is found in the late endosome membrane. Its subcellular location is the lysosome membrane. Functionally, as part of AP-5, a probable fifth adaptor protein complex it may be involved in endosomal transport. The protein is AP-5 complex subunit sigma-1 (Ap5s1) of Mus musculus (Mouse).